The following is a 492-amino-acid chain: MARAACLLRAISRVLLLPLPLLLLLLLLLPSPLMARARPPESHRHHPVKKGPRLLHAALPNTLTSVPASHWVPSPAGSSRPLRCGVPDLPDVLNARNRQKRFVLSGGRWEKTDLTYRILRFPWQLVREQVRQTVAEALQVWSEVTPLTFTEVHEGRADIMIDFARYWHGDNLPFDGPGGILAHAFFPKTHREGDVHFDYDETWTIGDNQGTDLLQVAAHEFGHVLGLQHTTAAKALMSPFYTFRYPLSLSPDDRRGIQHLYGRPQMAPTSPAPTLSSQAGTDTNEIALLEPETPPDVCETSFDAVSTIRGELFFFKAGFVWRLRSGRLQPGYPALASRHWQGLPSPVDAAFEDAQGQIWFFQGAQYWVYDGEKPVLGPAPLSKLGLQGSPVHAALVWGPEKNKIYFFRGGDYWRFHPRTQRVDNPVPRRSTDWRGVPSEIDAAFQDAEGYAYFLRGHLYWKFDPVKVKVLEGFPRPVGPDFFDCAEPANTFR.

The signal sequence occupies residues 1 to 35 (MARAACLLRAISRVLLLPLPLLLLLLLLLPSPLMA). Residues 36–101 (RARPPESHRH…VLNARNRQKR (66 aa)) constitute a propeptide, activation peptide. A Cysteine switch motif is present at residues 82-89 (LRCGVPDL). Zn(2+) contacts are provided by Cys-84, His-168, and Asp-170. Residues Asp-175, Gly-176, Gly-178, and Ile-180 each coordinate Ca(2+). The Zn(2+) site is built by His-183, His-196, and His-219. Glu-220 is a catalytic residue. Residues His-223 and His-229 each coordinate Zn(2+). Hemopexin repeat units follow at residues 295–343 (PDVC…WQGL), 344–386 (PSPV…KLGL), 388–436 (GSPV…WRGV), and 437–484 (PSEI…FFDC). The cysteines at positions 298 and 484 are disulfide-linked.

The protein belongs to the peptidase M10A family. It depends on Ca(2+) as a cofactor. Requires Zn(2+) as cofactor. The precursor is cleaved by a furin endopeptidase. Specifically expressed in the mammary gland during apoptosis.

It localises to the secreted. The protein resides in the extracellular space. Its subcellular location is the extracellular matrix. May play an important role in the progression of epithelial malignancies. This chain is Stromelysin-3 (Mmp11), found in Mus musculus (Mouse).